Reading from the N-terminus, the 334-residue chain is Protein-glutamate methylesterase FrzG (334 aa).

One can recognise a CheB-type methylesterase domain in the interval 147–334 (PYPLVAIAAS…AALMQWVDVC (188 aa)). Active-site residues include Ser-156, His-183, and Asp-276.

It catalyses the reaction [protein]-L-glutamate 5-O-methyl ester + H2O = L-glutamyl-[protein] + methanol + H(+). In terms of biological role, probable methylesterase. Required for the normal aggregation of M.xanthus cells during fruiting body formation. It is also a component of a sensory transduction pathway that controls the frequency at which cells reverse their gliding direction. It may remove the methyl group from the gamma-glutamyl methyl ester residues in FrzCD. The chain is Protein-glutamate methylesterase FrzG (frzG) from Myxococcus xanthus.